The chain runs to 499 residues: Ethanolamine-phosphate phospho-lyase (499 aa).

Lys278 is subject to N6-(pyridoxal phosphate)lysine.

It belongs to the class-III pyridoxal-phosphate-dependent aminotransferase family. In terms of assembly, homotetramer. Pyridoxal 5'-phosphate is required as a cofactor.

Its subcellular location is the mitochondrion. The catalysed reaction is phosphoethanolamine + H2O = acetaldehyde + NH4(+) + phosphate. Its function is as follows. Catalyzes the pyridoxal-phosphate-dependent breakdown of phosphoethanolamine, converting it to ammonia, inorganic phosphate and acetaldehyde. In Mus musculus (Mouse), this protein is Ethanolamine-phosphate phospho-lyase (Etnppl).